A 333-amino-acid chain; its full sequence is 5-formaminoimidazole-4-carboxamide-1-(beta)-D-ribofuranosyl 5'-monophosphate synthetase (333 aa).

5-amino-1-(5-phospho-beta-D-ribosyl)imidazole-4-carboxamide-binding residues include His10 and Ser70. Residues 91–324 (KEVLKWESDR…IAREIKIAIE (234 aa)) form the ATP-grasp domain. ATP-binding positions include 121 to 181 (PDDI…VPIY) and Glu203. Asn231 is a 5-amino-1-(5-phospho-beta-D-ribosyl)imidazole-4-carboxamide binding site. Mg(2+)-binding residues include Glu269 and Glu282.

This sequence belongs to the phosphohexose mutase family. Mg(2+) is required as a cofactor. Mn(2+) serves as cofactor.

It catalyses the reaction 5-amino-1-(5-phospho-beta-D-ribosyl)imidazole-4-carboxamide + formate + ATP = 5-formamido-1-(5-phospho-D-ribosyl)imidazole-4-carboxamide + ADP + phosphate. It functions in the pathway purine metabolism; IMP biosynthesis via de novo pathway; 5-formamido-1-(5-phospho-D-ribosyl)imidazole-4-carboxamide from 5-amino-1-(5-phospho-D-ribosyl)imidazole-4-carboxamide (formate route): step 1/1. Functionally, catalyzes the ATP- and formate-dependent formylation of 5-aminoimidazole-4-carboxamide-1-beta-d-ribofuranosyl 5'-monophosphate (AICAR) to 5-formaminoimidazole-4-carboxamide-1-beta-d-ribofuranosyl 5'-monophosphate (FAICAR) in the absence of folates. This chain is 5-formaminoimidazole-4-carboxamide-1-(beta)-D-ribofuranosyl 5'-monophosphate synthetase, found in Pyrococcus horikoshii (strain ATCC 700860 / DSM 12428 / JCM 9974 / NBRC 100139 / OT-3).